Consider the following 114-residue polypeptide: uncharacterized protein (114 aa).

Positions 31 to 72 (EFEKLVSEQMKTMDKLLDLQSELDRCKQIEAELRHLERDARL) form a coiled coil.

This is an uncharacterized protein from Bacillus subtilis (strain 168).